A 270-amino-acid polypeptide reads, in one-letter code: 5'-AMP-activated protein kinase subunit beta-1 (270 aa).

A disordered region spans residues Met-1–Leu-46. Gly-2 carries N-myristoyl glycine lipidation. Phosphothreonine is present on Thr-4. Phosphoserine occurs at positions 5 and 6. A Phosphothreonine modification is found at Thr-19. Residues Arg-21–Ile-36 are compositionally biased toward basic and acidic residues. Residues Ser-24 and Ser-25 each carry the phosphoserine; by autocatalysis modification. Phosphoserine occurs at positions 40, 96, and 101. Positions Glu-68–Phe-163 are glycogen-binding domain. Ser-108 is subject to Phosphoserine; by autocatalysis. Thr-148 carries the phosphothreonine modification. A Phosphoserine modification is found at Ser-182.

It belongs to the 5'-AMP-activated protein kinase beta subunit family. In terms of assembly, AMPK is a heterotrimer of an alpha catalytic subunit (PRKAA1 or PRKAA2), a beta (PRKAB1 or PRKAB2) and a gamma non-catalytic subunits (PRKAG1, PRKAG2 or PRKAG3). Interacts with FNIP1 and FNIP2. Post-translationally, phosphorylated when associated with the catalytic subunit (PRKAA1 or PRKAA2). Phosphorylated by ULK1; leading to negatively regulate AMPK activity and suggesting the existence of a regulatory feedback loop between ULK1 and AMPK.

Its function is as follows. Non-catalytic subunit of AMP-activated protein kinase (AMPK), an energy sensor protein kinase that plays a key role in regulating cellular energy metabolism. In response to reduction of intracellular ATP levels, AMPK activates energy-producing pathways and inhibits energy-consuming processes: inhibits protein, carbohydrate and lipid biosynthesis, as well as cell growth and proliferation. AMPK acts via direct phosphorylation of metabolic enzymes, and by longer-term effects via phosphorylation of transcription regulators. Also acts as a regulator of cellular polarity by remodeling the actin cytoskeleton; probably by indirectly activating myosin. Beta non-catalytic subunit acts as a scaffold on which the AMPK complex assembles, via its C-terminus that bridges alpha (PRKAA1 or PRKAA2) and gamma subunits (PRKAG1, PRKAG2 or PRKAG3). The polypeptide is 5'-AMP-activated protein kinase subunit beta-1 (PRKAB1) (Pongo abelii (Sumatran orangutan)).